A 35-amino-acid polypeptide reads, in one-letter code: Cupiennin-2b (35 aa).

Gln-35 is subject to Glutamine amide.

Expressed by the venom gland.

It localises to the secreted. In Cupiennius salei (American wandering spider), this protein is Cupiennin-2b.